Consider the following 151-residue polypeptide: Ribosome maturation factor RimP (151 aa).

It belongs to the RimP family.

It localises to the cytoplasm. Functionally, required for maturation of 30S ribosomal subunits. This chain is Ribosome maturation factor RimP, found in Alcanivorax borkumensis (strain ATCC 700651 / DSM 11573 / NCIMB 13689 / SK2).